The chain runs to 70 residues: Small ribosomal subunit protein bS21 (70 aa).

Belongs to the bacterial ribosomal protein bS21 family.

The protein is Small ribosomal subunit protein bS21 of Sulfurovum sp. (strain NBC37-1).